The sequence spans 561 residues: Long-chain-fatty-acid--CoA ligase (561 aa).

213–224 contributes to the ATP binding site; it reads YTGGTTGVAKGA.

The protein belongs to the ATP-dependent AMP-binding enzyme family. Mg(2+) is required as a cofactor.

The protein localises to the membrane. The catalysed reaction is a long-chain fatty acid + ATP + CoA = a long-chain fatty acyl-CoA + AMP + diphosphate. The protein operates within lipid metabolism; fatty acid beta-oxidation. Functionally, catalyzes the esterification, concomitant with transport, of exogenous long-chain fatty acids into metabolically active CoA thioesters for subsequent degradation or incorporation into phospholipids. This Escherichia coli O157:H7 protein is Long-chain-fatty-acid--CoA ligase (fadD).